Here is a 391-residue protein sequence, read N- to C-terminus: Formate-dependent phosphoribosylglycinamide formyltransferase (391 aa).

N(1)-(5-phospho-beta-D-ribosyl)glycinamide-binding positions include 20–21 (EL) and Glu-80. ATP contacts are provided by residues Arg-112, Lys-153, 158–163 (SSGKGQ), 193–196 (EGFI), and Glu-201. One can recognise an ATP-grasp domain in the interval 117 to 306 (RLAAEDLQIP…EFALHVRAFL (190 aa)). Glu-265 and Glu-277 together coordinate Mg(2+). N(1)-(5-phospho-beta-D-ribosyl)glycinamide contacts are provided by residues Asp-284, Lys-354, and 361–362 (RR).

It belongs to the PurK/PurT family. Homodimer.

The enzyme catalyses N(1)-(5-phospho-beta-D-ribosyl)glycinamide + formate + ATP = N(2)-formyl-N(1)-(5-phospho-beta-D-ribosyl)glycinamide + ADP + phosphate + H(+). It participates in purine metabolism; IMP biosynthesis via de novo pathway; N(2)-formyl-N(1)-(5-phospho-D-ribosyl)glycinamide from N(1)-(5-phospho-D-ribosyl)glycinamide (formate route): step 1/1. Its function is as follows. Involved in the de novo purine biosynthesis. Catalyzes the transfer of formate to 5-phospho-ribosyl-glycinamide (GAR), producing 5-phospho-ribosyl-N-formylglycinamide (FGAR). Formate is provided by PurU via hydrolysis of 10-formyl-tetrahydrofolate. This is Formate-dependent phosphoribosylglycinamide formyltransferase from Photobacterium profundum (strain SS9).